The chain runs to 57 residues: UPF0434 protein swp_2279 (57 aa).

This sequence belongs to the UPF0434 family.

The sequence is that of UPF0434 protein swp_2279 from Shewanella piezotolerans (strain WP3 / JCM 13877).